Here is a 307-residue protein sequence, read N- to C-terminus: Pseudouridine-5'-phosphate glycosidase (307 aa).

Catalysis depends on glutamate 26, which acts as the Proton donor. Residues lysine 88 and valine 108 each contribute to the substrate site. Residue aspartate 140 participates in Mn(2+) binding. 142–144 (SAD) is a substrate binding site. Lysine 161 acts as the Nucleophile in catalysis.

This sequence belongs to the pseudouridine-5'-phosphate glycosidase family. Homotrimer. It depends on Mn(2+) as a cofactor.

The enzyme catalyses D-ribose 5-phosphate + uracil = psi-UMP + H2O. Its function is as follows. Catalyzes the reversible cleavage of pseudouridine 5'-phosphate (PsiMP) to ribose 5-phosphate and uracil. Functions biologically in the cleavage direction, as part of a pseudouridine degradation pathway. This Clostridium botulinum (strain Langeland / NCTC 10281 / Type F) protein is Pseudouridine-5'-phosphate glycosidase.